The following is an 89-amino-acid chain: Small ribosomal subunit protein uS15 (89 aa).

Belongs to the universal ribosomal protein uS15 family. Part of the 30S ribosomal subunit. Forms a bridge to the 50S subunit in the 70S ribosome, contacting the 23S rRNA.

Functionally, one of the primary rRNA binding proteins, it binds directly to 16S rRNA where it helps nucleate assembly of the platform of the 30S subunit by binding and bridging several RNA helices of the 16S rRNA. Its function is as follows. Forms an intersubunit bridge (bridge B4) with the 23S rRNA of the 50S subunit in the ribosome. This is Small ribosomal subunit protein uS15 from Magnetococcus marinus (strain ATCC BAA-1437 / JCM 17883 / MC-1).